Consider the following 352-residue polypeptide: Protein RecA (352 aa).

Residue 67–74 (GPESSGKT) participates in ATP binding. Residues 333–352 (DSTPDFAVDGNDAEETEQDF) are disordered. Residues 343 to 352 (NDAEETEQDF) show a composition bias toward acidic residues.

The protein belongs to the RecA family.

It is found in the cytoplasm. Can catalyze the hydrolysis of ATP in the presence of single-stranded DNA, the ATP-dependent uptake of single-stranded DNA by duplex DNA, and the ATP-dependent hybridization of homologous single-stranded DNAs. It interacts with LexA causing its activation and leading to its autocatalytic cleavage. The protein is Protein RecA of Klebsiella pneumoniae (strain 342).